Consider the following 247-residue polypeptide: Phosphomannomutase (247 aa).

Catalysis depends on aspartate 13, which acts as the Nucleophile. Mg(2+)-binding residues include aspartate 13 and aspartate 15. The active-site Proton donor/acceptor is aspartate 15. Residues arginine 22, arginine 124, arginine 135, arginine 142, serine 180, and aspartate 182 each contribute to the alpha-D-mannose 1-phosphate site. Positions 208, 220, and 225 each coordinate Mg(2+).

Belongs to the eukaryotic PMM family. As to quaternary structure, homodimer. Requires Mg(2+) as cofactor.

It is found in the cytoplasm. It carries out the reaction alpha-D-mannose 1-phosphate = D-mannose 6-phosphate. It participates in nucleotide-sugar biosynthesis; GDP-alpha-D-mannose biosynthesis; alpha-D-mannose 1-phosphate from D-fructose 6-phosphate: step 2/2. Catalyzes the interconversion of mannose-6-phosphate to mannose-1-phosphate, the precursor for the synthesis of GDP-mannose. GDP-mannose is an essential sugar nucleotide for the synthesis of D-mannose-containing cell wall polysaccharides (galactomannans and glucomannans), glycolipids, glycoproteins and the antioxidant L-ascorbate. Can complement the yeast temperature-sensitive mutant sec53-6. This Glycine max (Soybean) protein is Phosphomannomutase.